The chain runs to 147 residues: Hemoglobin subunit beta-H1 (147 aa).

The Globin domain occupies His-3–His-147. His-64 and His-93 together coordinate heme b.

Belongs to the globin family. As to quaternary structure, heterotetramer of two alpha chains and two beta chains. Red blood cells.

In terms of biological role, this is an embryonic beta-type chain. This is Hemoglobin subunit beta-H1 (Hbb-bh1) from Mus musculus (Mouse).